The sequence spans 264 residues: MKKLKLHGFNNLTKSLSFCIYDICYAKTAEERDGYIAYIDELYNANRLTEILSETCSIIGANILNIARQDYEPQGASVTILVSEEPVDPKLIDQTKHPGPLPETVVAHLDKSHICVHTYPESHPEGGLCTFRADIEVSTCGVISPLKALNYLIHQLESDIVTIDYRVRGFTRDVNGMKHFIDHEINSIQNFMSEDMKSLYDMVDVNVYQENIFHTKMLLKEFDLKHYMFHTKPEDLTETERQEITAALWKEMREIYYGRNISAV.

Residue Ser-112 is the Schiff-base intermediate with substrate; via pyruvic acid of the active site. Ser-112 carries the post-translational modification Pyruvic acid (Ser); by autocatalysis. Residue His-117 is the Proton acceptor; for processing activity of the active site. The active-site Proton donor; for catalytic activity is the Cys-140.

Belongs to the prokaryotic AdoMetDC family. Type 2 subfamily. In terms of assembly, heterooctamer of four alpha and four beta chains arranged as a tetramer of alpha/beta heterodimers. Requires pyruvate as cofactor. In terms of processing, is synthesized initially as an inactive proenzyme. Formation of the active enzyme involves a self-maturation process in which the active site pyruvoyl group is generated from an internal serine residue via an autocatalytic post-translational modification. Two non-identical subunits are generated from the proenzyme in this reaction, and the pyruvate is formed at the N-terminus of the alpha chain, which is derived from the carboxyl end of the proenzyme. The post-translation cleavage follows an unusual pathway, termed non-hydrolytic serinolysis, in which the side chain hydroxyl group of the serine supplies its oxygen atom to form the C-terminus of the beta chain, while the remainder of the serine residue undergoes an oxidative deamination to produce ammonia and the pyruvoyl group blocking the N-terminus of the alpha chain.

It catalyses the reaction S-adenosyl-L-methionine + H(+) = S-adenosyl 3-(methylsulfanyl)propylamine + CO2. Its pathway is amine and polyamine biosynthesis; S-adenosylmethioninamine biosynthesis; S-adenosylmethioninamine from S-adenosyl-L-methionine: step 1/1. Its function is as follows. Catalyzes the decarboxylation of S-adenosylmethionine to S-adenosylmethioninamine (dcAdoMet), the propylamine donor required for the synthesis of the polyamines spermine and spermidine from the diamine putrescine. In Salmonella choleraesuis (strain SC-B67), this protein is S-adenosylmethionine decarboxylase proenzyme.